The following is a 241-amino-acid chain: Large ribosomal subunit protein uL3 (241 aa).

2 disordered regions span residues Val139–Met166 and Ala214–Ala241. At Gln151 the chain carries N5-methylglutamine. Over residues Ala229–Ala241 the composition is skewed to low complexity.

In terms of assembly, part of the 50S ribosomal subunit. Forms a cluster with proteins L14 and L19. Post-translationally, methylated, on either Lys-155 or Lys-158. In terms of processing, methylated by PrmB.

Functionally, one of the primary rRNA binding proteins, it binds directly near the 3'-end of the 23S rRNA, where it nucleates assembly of the 50S subunit. The polypeptide is Large ribosomal subunit protein uL3 (Rhodopseudomonas palustris (strain ATCC BAA-98 / CGA009)).